The primary structure comprises 255 residues: Small ribosomal subunit protein uS2 (255 aa).

This sequence belongs to the universal ribosomal protein uS2 family.

The protein is Small ribosomal subunit protein uS2 of Streptococcus pyogenes serotype M28 (strain MGAS6180).